The following is a 481-amino-acid chain: MQAKLTKNEFIERLKTSEGKQFNVDLWYGFQCFDYANAGWKVLFGLLLKGLGAKDIPFANNFDGLATVYQNTPDFLAQPGDMVVFGSNYGAGYGHVAWVIEATLDYIIVYEQNWLGGGWTDGIEQPAGVGKKLQDDNMLMISLCGLSVRILKVRQRHDQFNLLHKHPKKETAKPQPKAVELKIIKDVVKGYDLPKRGSNPKGIVIHNDAGSKGATAEAYRNGLVNAPLSRLEAGIAHSYVSGNTVWQALDESQVGWHTANQIGNKYYYGIEVCQSMGADNATFLKNEQATFQECARLLKKWGLPANRNTIRLHNEFTSTSCPHRSSVLHTGFDPVTRGLLPEDKRLQLKDYFIKQIRAYMDGKIPVATVSNESSASSNTVKPVASAWKRNKYGTYYMEESARFTNGNQPITVRKVGPFLSCPVGYQFQPGGYCDYTEVMLQDGHVWVGYTWEGQRYYLPIRTWNGSAPPNQILGDLWGEIS.

The Peptidase C51 domain occupies Lys-7–Ser-142. Positions Ser-198–His-323 constitute an N-acetylmuramoyl-L-alanine amidase domain. The region spanning Glu-398–Ser-466 is the SH3b domain.

It belongs to the N-acetylmuramoyl-L-alanine amidase 2 family.

It is found in the secreted. The catalysed reaction is Hydrolyzes the link between N-acetylmuramoyl residues and L-amino acid residues in certain cell-wall glycopeptides.. In terms of biological role, autolysins are involved in some important biological processes such as cell separation, cell-wall turnover, competence for genetic transformation, formation of the flagella and sporulation. Autolysin strictly depends on the presence of choline-containing cell walls for activity. In Staphylococcus aureus, this protein is Autolysin (lytA).